Here is a 732-residue protein sequence, read N- to C-terminus: Anthranilate synthase (732 aa).

Positions 533-728 constitute a Glutamine amidotransferase type-1 domain; it reads RVLLVDHDDS…MDRLAAGALT (196 aa). 583–585 serves as a coordination point for L-glutamine; sequence GPG. Catalysis depends on Cys610, which acts as the Nucleophile; for GATase activity. Residues Gln614 and 660–661 contribute to the L-glutamine site; that span reads SL. Active-site for GATase activity residues include His699 and Glu701.

The enzyme catalyses chorismate + L-glutamine = anthranilate + pyruvate + L-glutamate + H(+). It participates in amino-acid biosynthesis; L-tryptophan biosynthesis; L-tryptophan from chorismate: step 1/5. This Azospirillum brasilense protein is Anthranilate synthase (trpE(G)).